Consider the following 583-residue polypeptide: Threonine--tRNA ligase (583 aa).

Residues 185–478 (DHRKLGRELD…LVEHYGGAFP (294 aa)) form a catalytic region. Cys278, His329, and His455 together coordinate Zn(2+).

Belongs to the class-II aminoacyl-tRNA synthetase family. As to quaternary structure, homodimer. It depends on Zn(2+) as a cofactor.

The protein localises to the cytoplasm. The catalysed reaction is tRNA(Thr) + L-threonine + ATP = L-threonyl-tRNA(Thr) + AMP + diphosphate + H(+). Its function is as follows. Catalyzes the attachment of threonine to tRNA(Thr) in a two-step reaction: L-threonine is first activated by ATP to form Thr-AMP and then transferred to the acceptor end of tRNA(Thr). Also edits incorrectly charged L-seryl-tRNA(Thr). The polypeptide is Threonine--tRNA ligase (Borrelia turicatae (strain 91E135)).